The primary structure comprises 791 residues: Solute carrier family 26 member 9 (791 aa).

At 1-70 (MSQPRPRYVV…WLPKYKIKDY (70 aa)) the chain is on the cytoplasmic side. The chain crosses the membrane as a helical span at residues 71 to 96 (IIPDLLGGLSGGSIQVPQGMAFALLA). The Extracellular segment spans residues 97–99 (NLP). Residues 100–117 (AVNGLYSSFFPLLTYFFL) form a helical membrane-spanning segment. The Cytoplasmic portion of the chain corresponds to 118-128 (GGVHQMVPGTF). The chain crosses the membrane as a helical span at residues 129–142 (AVISILVGNICLQL). Residues 143 to 171 (APESKFQVFNNATNESYVDTAAMEAERLH) are Extracellular-facing. The helical transmembrane segment at 172-190 (VSATLACLTAIIQMGLGFM) threads the bilayer. The Cytoplasmic segment spans residues 191 to 202 (QFGFVAIYLSES). The helical transmembrane segment at 203-224 (FIRGFMTAAGLQILISVLKYIF) threads the bilayer. Over 225–235 (GLTIPSYTGPG) the chain is Extracellular. Residues 236-244 (SIVFTFIDI) constitute an intramembrane region (helical). The Extracellular segment spans residues 245–254 (CKNLPHTNIA). Residues 255–273 (SLIFALISGAFLVLVKELN) form a helical membrane-spanning segment. The Cytoplasmic segment spans residues 274 to 281 (ARYMHKIR). Residues 282-297 (FPIPTEMIVVVVATAI) form a helical membrane-spanning segment. At 298 to 327 (SGGCKMPKKYHMQIVGEIQRGFPTPVSPVV) the chain is on the extracellular side. A helical membrane pass occupies residues 328–348 (SQWKDMIGTAFSLAIVSYVIN). At 349–366 (LAMGRTLANKHGYDVDSN) the chain is on the cytoplasmic side. A helical membrane pass occupies residues 367–382 (QEMIALGCSNFFGSFF). The Extracellular segment spans residues 383 to 390 (KIHVICCA). A helical membrane pass occupies residues 391–400 (LSVTLAVDGA). Topologically, residues 401 to 404 (GGKS) are cytoplasmic. Residues 405 to 423 (QVASLCVSLVVMITMLVLG) traverse the membrane as a helical segment. Over 424-428 (IYLYP) the chain is Extracellular. Residues 429 to 450 (LPKSVLGALIAVNLKNSLKQLT) traverse the membrane as a helical segment. Residues 451-464 (DPYYLWRKSKLDCC) are Cytoplasmic-facing. A helical membrane pass occupies residues 465–476 (IWVVSFLSSFFL). Residue serine 477 is a topological domain, extracellular. Residues 478–489 (LPYGVAVGVAFS) traverse the membrane as a helical segment. The Cytoplasmic portion of the chain corresponds to 490–791 (VLVVVFQTQF…MFHAETLTAL (302 aa)). Residues 519-737 (TYNRAQDIQG…PSIHDAVLFA (219 aa)) enclose the STAS domain. The tract at residues 602 to 650 (FENAPPTDPNNNQTPANGTSVSYITFSPDSSSPAQSEPPASAEAPGEPS) is disordered. Polar residues predominate over residues 610–626 (PNNNQTPANGTSVSYIT). A compositionally biased stretch (low complexity) spans 628-650 (SPDSSSPAQSEPPASAEAPGEPS).

The protein belongs to the SLC26A/SulP transporter (TC 2.A.53) family. As to quaternary structure, homodimer. As to expression, predominantly expressed in lung at the luminal side of the bronchiolar and alveolar epithelium of lung. To a lower extent, also expressed in pancreas and prostate.

Its subcellular location is the cell membrane. The protein resides in the endomembrane system. The catalysed reaction is chloride(in) = chloride(out). The enzyme catalyses hydrogencarbonate(in) + chloride(out) = hydrogencarbonate(out) + chloride(in). Inhibited by ammonium and thiosulfate. In terms of biological role, ion transporter that can act both as an ion channel and anion exchanger. Mainly acts as a chloride channel, which mediate uncoupled chloride anion transport in an alternate-access mechanism where a saturable binding site is alternately exposed to either one or the other side of the membrane. Also acts as a DIDS- and thiosulfate- sensitive anion exchanger the exchange of chloride for bicarbonate ions across the cell membrane. The protein is Solute carrier family 26 member 9 of Homo sapiens (Human).